Reading from the N-terminus, the 261-residue chain is uncharacterized protein (261 aa).

This is an uncharacterized protein from Bacillus subtilis (strain 168).